A 456-amino-acid polypeptide reads, in one-letter code: Chromosomal replication initiator protein DnaA (456 aa).

The segment at 1-79 (MSQEIWADVL…QHPQVSFQVL (79 aa)) is domain I, interacts with DnaA modulators. Positions 79–112 (LPASQDALLLPSDPPPAPISPGRAPAPPPADNRK) are domain II. The tract at residues 89 to 112 (PSDPPPAPISPGRAPAPPPADNRK) is disordered. Pro residues predominate over residues 90–108 (SDPPPAPISPGRAPAPPPA). Residues 113–329 (TLNPKYTFEN…GALMRVVAFS (217 aa)) form a domain III, AAA+ region region. Glycine 157, glycine 159, lysine 160, and threonine 161 together coordinate ATP. Residues 330 to 456 (SLNNVPFSRA…KGLEDEDSRA (127 aa)) form a domain IV, binds dsDNA region.

This sequence belongs to the DnaA family. Oligomerizes as a right-handed, spiral filament on DNA at oriC.

It is found in the cytoplasm. Its function is as follows. Plays an essential role in the initiation and regulation of chromosomal replication. ATP-DnaA binds to the origin of replication (oriC) to initiate formation of the DNA replication initiation complex once per cell cycle. Binds the DnaA box (a 9 base pair repeat at the origin) and separates the double-stranded (ds)DNA. Forms a right-handed helical filament on oriC DNA; dsDNA binds to the exterior of the filament while single-stranded (ss)DNA is stabiized in the filament's interior. The ATP-DnaA-oriC complex binds and stabilizes one strand of the AT-rich DNA unwinding element (DUE), permitting loading of DNA polymerase. After initiation quickly degrades to an ADP-DnaA complex that is not apt for DNA replication. Binds acidic phospholipids. The polypeptide is Chromosomal replication initiator protein DnaA (Deinococcus deserti (strain DSM 17065 / CIP 109153 / LMG 22923 / VCD115)).